The primary structure comprises 304 residues: Oxygen-dependent coproporphyrinogen-III oxidase (304 aa).

Serine 94 contributes to the substrate binding site. A divalent metal cation is bound by residues histidine 98 and histidine 108. Catalysis depends on histidine 108, which acts as the Proton donor. 110 to 112 is a substrate binding site; it reads NVR. Positions 147 and 177 each coordinate a divalent metal cation. Positions 242 to 277 are important for dimerization; that stretch reads YVEFNLVWDRGTLFGLQSGGRTESVLMSMPPLARWQ. 260 to 262 lines the substrate pocket; sequence GGR.

The protein belongs to the aerobic coproporphyrinogen-III oxidase family. Homodimer. The cofactor is a divalent metal cation.

It is found in the cytoplasm. The enzyme catalyses coproporphyrinogen III + O2 + 2 H(+) = protoporphyrinogen IX + 2 CO2 + 2 H2O. Its pathway is porphyrin-containing compound metabolism; protoporphyrin-IX biosynthesis; protoporphyrinogen-IX from coproporphyrinogen-III (O2 route): step 1/1. In terms of biological role, involved in the heme biosynthesis. Catalyzes the aerobic oxidative decarboxylation of propionate groups of rings A and B of coproporphyrinogen-III to yield the vinyl groups in protoporphyrinogen-IX. The chain is Oxygen-dependent coproporphyrinogen-III oxidase from Sodalis glossinidius (strain morsitans).